Consider the following 148-residue polypeptide: Large ribosomal subunit protein uL22c (148 aa).

The protein belongs to the universal ribosomal protein uL22 family. In terms of assembly, part of the 50S ribosomal subunit.

Its subcellular location is the plastid. It localises to the chloroplast. In terms of biological role, this protein binds specifically to 23S rRNA. The globular domain of the protein is located near the polypeptide exit tunnel on the outside of the subunit, while an extended beta-hairpin is found that lines the wall of the exit tunnel in the center of the 70S ribosome. In Zea mays (Maize), this protein is Large ribosomal subunit protein uL22c (rpl22).